The primary structure comprises 85 residues: ATP synthase subunit c (85 aa).

The next 2 helical transmembrane spans lie at 10 to 30 and 53 to 73; these read IAVGIIVGLASLGTAIGFAIL and FIIAGLLDAVPMIGIVIALLF.

Belongs to the ATPase C chain family. F-type ATPases have 2 components, F(1) - the catalytic core - and F(0) - the membrane proton channel. F(1) has five subunits: alpha(3), beta(3), gamma(1), delta(1), epsilon(1). F(0) has three main subunits: a(1), b(2) and c(10-14). The alpha and beta chains form an alternating ring which encloses part of the gamma chain. F(1) is attached to F(0) by a central stalk formed by the gamma and epsilon chains, while a peripheral stalk is formed by the delta and b chains.

It is found in the cell inner membrane. Its function is as follows. F(1)F(0) ATP synthase produces ATP from ADP in the presence of a proton or sodium gradient. F-type ATPases consist of two structural domains, F(1) containing the extramembraneous catalytic core and F(0) containing the membrane proton channel, linked together by a central stalk and a peripheral stalk. During catalysis, ATP synthesis in the catalytic domain of F(1) is coupled via a rotary mechanism of the central stalk subunits to proton translocation. In terms of biological role, key component of the F(0) channel; it plays a direct role in translocation across the membrane. A homomeric c-ring of between 10-14 subunits forms the central stalk rotor element with the F(1) delta and epsilon subunits. The protein is ATP synthase subunit c of Aliivibrio salmonicida (strain LFI1238) (Vibrio salmonicida (strain LFI1238)).